A 357-amino-acid chain; its full sequence is 3-dehydroquinate synthase (357 aa).

NAD(+)-binding positions include 104-108 (GVVGD), 128-129 (TT), lysine 141, and 168-171 (FLET). Zn(2+) contacts are provided by glutamate 183, histidine 243, and histidine 260.

Belongs to the sugar phosphate cyclases superfamily. Dehydroquinate synthase family. It depends on NAD(+) as a cofactor. Co(2+) serves as cofactor. Zn(2+) is required as a cofactor.

It localises to the cytoplasm. The catalysed reaction is 7-phospho-2-dehydro-3-deoxy-D-arabino-heptonate = 3-dehydroquinate + phosphate. It participates in metabolic intermediate biosynthesis; chorismate biosynthesis; chorismate from D-erythrose 4-phosphate and phosphoenolpyruvate: step 2/7. Catalyzes the conversion of 3-deoxy-D-arabino-heptulosonate 7-phosphate (DAHP) to dehydroquinate (DHQ). In Streptococcus pyogenes serotype M3 (strain ATCC BAA-595 / MGAS315), this protein is 3-dehydroquinate synthase.